The sequence spans 344 residues: [LysW]-L-2-aminoadipate 6-phosphate reductase (344 aa).

NADP(+) contacts are provided by residues 12–15 (SGYA), 36–38 (SRR), and leucine 75. The active site involves cysteine 148. NADP(+) is bound by residues serine 180, alanine 184, and asparagine 312.

The protein belongs to the NAGSA dehydrogenase family. Type 1 subfamily. LysY sub-subfamily. In terms of assembly, homotetramer. Interacts with LysW. May form a ternary complex with LysW and LysZ.

The protein localises to the cytoplasm. It carries out the reaction [amino-group carrier protein]-C-terminal-N-(1-carboxy-5-oxopentan-1-yl)-L-glutamine + phosphate + NADP(+) = [amino-group carrier protein]-C-terminal-N-(1-carboxy-5-phosphooxy-5-oxopentan-1-yl)-L-glutamine + NADPH + H(+). It participates in amino-acid biosynthesis; L-lysine biosynthesis via AAA pathway; L-lysine from L-alpha-aminoadipate (Thermus route): step 3/5. In terms of biological role, catalyzes the NADPH-dependent reduction of [LysW]-aminoadipate 6-phosphate to yield [LysW]-aminoadipate 6-semialdehyde. This Thermus thermophilus (strain ATCC BAA-163 / DSM 7039 / HB27) protein is [LysW]-L-2-aminoadipate 6-phosphate reductase.